Consider the following 32-residue polypeptide: Potassium channel toxin alpha-KTx 9.4 (32 aa).

3 cysteine pairs are disulfide-bonded: Cys3–Cys19, Cys6–Cys24, and Cys10–Cys26.

In terms of tissue distribution, expressed by the venom gland.

Its subcellular location is the secreted. Its function is as follows. Blocker of human voltage-gated potassium channel Kv1.1/KCNA1. The sequence is that of Potassium channel toxin alpha-KTx 9.4 from Hottentotta tamulus (Eastern Indian scorpion).